Reading from the N-terminus, the 82-residue chain is Immediate early response 3-interacting protein 1 (82 aa).

Helical transmembrane passes span 2–22 (AFTLYSLMQAALLCVNAIAVL) and 62–82 (VMRVPLIIVNSITIVLLLLFG).

Belongs to the YOS1 family.

The protein localises to the endoplasmic reticulum membrane. In terms of biological role, regulator of endoplasmic reticulum secretion that acts as a key determinant of brain size. Required for secretion of extracellular matrix proteins. Required for correct brain development by depositing sufficient extracellular matrix proteins for tissue integrity and the proliferation of neural progenitors. Acts as a regulator of the unfolded protein response (UPR). This is Immediate early response 3-interacting protein 1 from Rattus norvegicus (Rat).